A 328-amino-acid chain; its full sequence is Serine protease 48 (328 aa).

The N-terminal stretch at methionine 1 to glycine 20 is a signal peptide. Residues valine 28–serine 267 form the Peptidase S1 domain. A disulfide bond links cysteine 53 and cysteine 69. Catalysis depends on charge relay system residues histidine 68 and aspartate 114. 3 disulfides stabilise this stretch: cysteine 148–cysteine 226, cysteine 181–cysteine 205, and cysteine 216–cysteine 244. The active-site Charge relay system is the serine 220. Asparagine 263 carries an N-linked (GlcNAc...) asparagine glycan.

The protein belongs to the peptidase S1 family.

The protein resides in the secreted. In Homo sapiens (Human), this protein is Serine protease 48 (PRSS48).